The following is a 971-amino-acid chain: Reversion-inducing cysteine-rich protein with Kazal motifs (971 aa).

The first 22 residues, 1–22 (MASVRASPRSALLLLLAAAGVA), serve as a signal peptide directing secretion. A Knot 1 repeat occupies 37–84 (CCNHSKDNQMCRDVCEQIFSSKSESRLKHLLQRAPDYCPETMVEIWSC). The segment at 37–338 (CCNHSKDNQM…NPVEVSMLTC (302 aa)) is 5 X Knot repeats. Residues N39 and N86 are each glycosylated (N-linked (GlcNAc...) asparagine). Knot repeat units lie at residues 104-141 (CCEL…LFSC) and 151-197 (CCSY…LIHC). N-linked (GlcNAc...) asparagine glycosylation is present at N200. Knot repeat units follow at residues 216 to 263 (CCDR…LWQC) and 292 to 338 (CCSK…MLTC). Residues N297 and N352 are each glycosylated (N-linked (GlcNAc...) asparagine). Kazal-like domains lie at 627–673 (TFTG…PCIS), 698–752 (TFDK…PCQP), and 753–789 (FCRA…PCQA). Intrachain disulfides connect C633–C658, C635–C654, C643–C671, C716–C735, C724–C750, and C761–C787. Positions 704–750 (CSQYECVPRQLTCDQARDPVCDTDHMEHSNLCTLYQRGKSLSYRGPC) constitute a Kazal-like 2; degenerate domain. S942 is lipidated: GPI-anchor amidated serine. Positions 943–971 (SAVVGRPLFHSLLLLLSLGLTVHLLWTRP) are cleaved as a propeptide — removed in mature form.

Belongs to the RECK family. As to quaternary structure, interacts (via knot repeats) with WNT7A (via disordered linker region); the interaction is direct. Interacts (via knot repeats) with WNT7B (via disordered linker region); the interaction is direct. Interacts with ADGRA2; the interaction is direct. Interacts with MMP9.

It localises to the cell membrane. Its function is as follows. Functions together with ADGRA2 to enable brain endothelial cells to selectively respond to Wnt7 signals (WNT7A or WNT7B). Plays a key role in Wnt7-specific responses: required for central nervous system (CNS) angiogenesis and blood-brain barrier regulation. Acts as a Wnt7-specific coactivator of canonical Wnt signaling by decoding Wnt ligands: acts by interacting specifically with the disordered linker region of Wnt7, thereby conferring ligand selectivity for Wnt7. ADGRA2 is then required to deliver RECK-bound Wnt7 to frizzled by assembling a higher-order RECK-ADGRA2-Fzd-LRP5-LRP6 complex. Also acts as a serine protease inhibitor: negatively regulates matrix metalloproteinase-9 (MMP9) by suppressing MMP9 secretion and by direct inhibition of its enzymatic activity. Also inhibits metalloproteinase activity of MMP2 and MMP14 (MT1-MMP). This is Reversion-inducing cysteine-rich protein with Kazal motifs from Mus musculus (Mouse).